The primary structure comprises 161 residues: Cytochrome c-type biogenesis protein CcmE (161 aa).

The Cytoplasmic segment spans residues 1-8; it reads MNPVRKKR. A helical; Signal-anchor for type II membrane protein transmembrane segment spans residues 9–29; the sequence is LYIVLAILCGVSIAVALALTA. Residues 30 to 161 lie on the Periplasmic side of the membrane; that stretch reads LQENINLFYT…AKGYQQESAQ (132 aa). Heme contacts are provided by histidine 124 and tyrosine 128.

It belongs to the CcmE/CycJ family.

It is found in the cell inner membrane. Heme chaperone required for the biogenesis of c-type cytochromes. Transiently binds heme delivered by CcmC and transfers the heme to apo-cytochromes in a process facilitated by CcmF and CcmH. The sequence is that of Cytochrome c-type biogenesis protein CcmE from Ectopseudomonas mendocina (strain ymp) (Pseudomonas mendocina).